A 675-amino-acid polypeptide reads, in one-letter code: Protein REPRESSOR OF VERNALIZATION 1 (675 aa).

The segment at 1–143 (MGRRRRFTQQ…DPVKVTGKGK (143 aa)) is disordered. The span at 22–31 (AEPPKTAKPA) shows a compositional bias: low complexity. The span at 48 to 70 (EEEDEDEEDELELEDEEDDEKDL) shows a compositional bias: acidic residues. Positions 71–86 (EEMRRNEEEERREETR) are enriched in basic and acidic residues. The Nuclear localization signal signature appears at 73-80 (MRRNEEEE). Residues 87–96 (TRRRRGRKPK) are compositionally biased toward basic residues. Over residues 113 to 127 (SDEEEEEEVREEDST) the composition is skewed to acidic residues. One can recognise a BAH domain in the interval 157-275 (NTFELEDPVL…TVAKKLWNLT (119 aa)). Disordered stretches follow at residues 300 to 349 (ELPD…KPET), 493 to 512 (GLTP…LQMT), and 587 to 675 (LASP…ADHE). Basic and acidic residues-rich tracts occupy residues 333–346 (VSRD…HFVK), 499–512 (KTSE…LQMT), and 613–627 (KLEK…KPEE). The region spanning 372–518 (YRDKWLDKLL…LQMTDARCER (147 aa)) is the TFIIS central domain.

As to expression, expressed constitutively.

It localises to the nucleus. Functionally, component of a grass-specific mechanism of vernalization, a process by which prolonged cold exposure provides competence to flower in daylengths longer than 12 hours. Negative regulator of flowering required for vernalization establishment by repressing VRN1 before vernalization and in the fall season. This is Protein REPRESSOR OF VERNALIZATION 1 from Brachypodium distachyon (Purple false brome).